The chain runs to 573 residues: Developmental and secondary metabolism regulator VEL1 (573 aa).

The 195-residue stretch at 26 to 220 folds into the Velvet domain; that stretch reads NRHLWYQLTV…ADQGCRVRIR (195 aa). Residues 40–45 carry the Nuclear localization signal motif; it reads ERARAC. The tract at residues 222-520 is disordered; it reads DVRMRKRDGK…STGGKRKHDH (299 aa). Residues 230-245 are compositionally biased toward basic and acidic residues; that stretch reads GKGSGFDRRGEEEYSR. 2 stretches are compositionally biased toward pro residues: residues 291–310 and 341–351; these read APPP…PPAA and APIPPATPTGP. The span at 352–363 shows a compositional bias: low complexity; sequence YPTSSAAPSPYA. The span at 379-389 shows a compositional bias: pro residues; it reads PPAPSASPAPP. Polar residues predominate over residues 432 to 448; that stretch reads TPASQPTYSTPASQPTY. A compositionally biased stretch (pro residues) spans 458–475; the sequence is SAPPPAPYSAPAPPPPRP. A PEST region spans residues 476-504; sequence SMSQSSLAPLKIASLVSPLPPIEAQTEPL.

The protein belongs to the velvet family. VeA subfamily. Component of the heterotrimeric velvet complex composed of LAE1, VEL1 and VEL2; VEL1 acting as a bridging protein between LAE1 and VEL2. Interacts with LAE1.

Its subcellular location is the nucleus. The protein resides in the cytoplasm. In terms of biological role, component of the velvet transcription factor complex that controls sexual/asexual developmental ratio in response to light, promoting sexual development in the darkness while stimulating asexual sporulation under illumination. The velvet complex hat acts as a global regulator for secondary metabolite gene expression. Regulates expression of the carbohydrate-active enzyme gene clusters. This chain is Developmental and secondary metabolism regulator VEL1, found in Hypocrea jecorina (strain QM6a) (Trichoderma reesei).